A 287-amino-acid polypeptide reads, in one-letter code: Acetylglutamate kinase (287 aa).

Substrate-binding positions include 70 to 71 (GG), R92, and N184.

Belongs to the acetylglutamate kinase family. ArgB subfamily.

The protein localises to the cytoplasm. The catalysed reaction is N-acetyl-L-glutamate + ATP = N-acetyl-L-glutamyl 5-phosphate + ADP. Its pathway is amino-acid biosynthesis; L-arginine biosynthesis; N(2)-acetyl-L-ornithine from L-glutamate: step 2/4. Its function is as follows. Catalyzes the ATP-dependent phosphorylation of N-acetyl-L-glutamate. This is Acetylglutamate kinase from Roseobacter denitrificans (strain ATCC 33942 / OCh 114) (Erythrobacter sp. (strain OCh 114)).